The following is a 291-amino-acid chain: Small ribosomal subunit protein uS2 (291 aa).

The interval 235 to 291 (NLQEDEESGDSGVDPYQDREEEITDYSNYTPKDEASGDDEDEEDNSLVNDEDLYDDK) is disordered. The segment covering 270 to 291 (SGDDEDEEDNSLVNDEDLYDDK) has biased composition (acidic residues).

The protein belongs to the universal ribosomal protein uS2 family.

This chain is Small ribosomal subunit protein uS2, found in Treponema denticola (strain ATCC 35405 / DSM 14222 / CIP 103919 / JCM 8153 / KCTC 15104).